The following is a 538-amino-acid chain: Pentachlorophenol 4-monooxygenase (538 aa).

Residues 16–45 (AVLI…MIDR) and 288–298 (YRKGNVFLAGD) each bind FAD.

The protein belongs to the PheA/TfdB FAD monooxygenase family. Homodimer. FAD is required as a cofactor.

The enzyme catalyses pentachlorophenol + NADPH + O2 + H(+) = 2,3,5,6-tetrachloro-1,4-benzoquinone + chloride + NADP(+) + H2O. The catalysed reaction is 2,3,5,6-tetrachlorophenol + NADPH + O2 = 2,3,5,6-tetrachlorohydroquinone + NADP(+) + H2O. Its pathway is xenobiotic degradation; pentachlorophenol degradation. Its function is as follows. Dechlorination of pentachlorophenol to tetrachlorobenzoquinone. Also removes hydrogen and nitro, amino, and cyano groups from benzene ring at the para position in relation to the hydroxyl of phenol. The chain is Pentachlorophenol 4-monooxygenase (pcpB) from Sphingobium chlorophenolicum.